The following is a 226-amino-acid chain: Cell division protein SepF (226 aa).

The segment at 20–116 is disordered; the sequence is RAYDDAGYDK…ESLTYHTRDN (97 aa). Residues 22–44 are compositionally biased toward basic and acidic residues; that stretch reads YDDAGYDKGGYRESRYRSSRYSE. A compositionally biased stretch (acidic residues) spans 45-56; the sequence is DFGDEDDEDEEA. Over residues 62–95 the composition is skewed to basic and acidic residues; that stretch reads RRGDRSRLERAAARSGDVDHNVEGEQPERVERAS. The span at 97-111 shows a compositional bias: polar residues; sequence RSITRSAEPSESLTY.

Belongs to the SepF family. In terms of assembly, homodimer. Interacts with FtsZ.

The protein resides in the cytoplasm. Cell division protein that is part of the divisome complex and is recruited early to the Z-ring. Probably stimulates Z-ring formation, perhaps through the cross-linking of FtsZ protofilaments. Its function overlaps with FtsA. The protein is Cell division protein SepF of Salinispora arenicola (strain CNS-205).